A 476-amino-acid polypeptide reads, in one-letter code: Cytochrome P450 monooxygenase ppzE (476 aa).

Cys-452 lines the heme pocket.

The protein belongs to the cytochrome P450 family. Heme serves as cofactor.

It participates in secondary metabolite biosynthesis. Cytochrome P450 monooxygenase; part of the gene cluster that mediates the biosynthesis of pyrrolopyrazines, secondary metabolites showing insecticidal activity. The role of ppzE within the pathway has still to be determined. The single multifunctional NRPS ppzA is sufficient to produce peramine via condensation of 1-pyrroline-5-carboxylate and arginine, N-methylation of the alpha-amino group of arginine and reduction of the thioester and the cyclization to form an iminium ion resulting in release from the peptide synthetase. Deprotonation of this intermediate and oxidation of the pyrroline ring would give rise to peramine. In Epichloe species that produce only peramine, the peramine synthetase gene is not localized in a gene cluster, in contrast to Metarhizium species that contain additional pyrrolopyrazine biosynthesis genes. The 2-oxoglutarate-Fe(II) type oxidoreductase ppzC hydroxylates peramine to yield the newly identified compound 8-hydroxyperamine whereas ppzD converts L-proline into trans-4-hydroxy-L-proline, a precursor of peramine biosynthesis. The chain is Cytochrome P450 monooxygenase ppzE from Metarhizium majus (strain ARSEF 297).